A 217-amino-acid chain; its full sequence is Aminopyrimidine aminohydrolase (217 aa).

Substrate is bound at residue Asp-44. The Nucleophile role is filled by Cys-135. Positions 139 and 165 each coordinate substrate. Glu-207 serves as the catalytic Proton donor.

Belongs to the TenA family. In terms of assembly, homotetramer.

The catalysed reaction is 4-amino-5-aminomethyl-2-methylpyrimidine + H2O = 4-amino-5-hydroxymethyl-2-methylpyrimidine + NH4(+). It functions in the pathway cofactor biosynthesis; thiamine diphosphate biosynthesis. In terms of biological role, catalyzes an amino-pyrimidine hydrolysis reaction at the C5' of the pyrimidine moiety of thiamine compounds to give a hydroxymethylpyrimidine (HMP). Displays low activity on 4-amino-5-aminomethyl-2-methylpyrimidine as substrate, indicating that the enzyme may act on a different HMP precursor that may derive from the human stomach food assumption or processing. Is probably involved in thiamine biosynthesis. Does not display thiaminase II activity, as it is unable to hydrolyze thiamine. In Helicobacter pylori (Campylobacter pylori), this protein is Aminopyrimidine aminohydrolase.